The primary structure comprises 320 residues: UDP-N-acetylenolpyruvoylglucosamine reductase (320 aa).

One can recognise an FAD-binding PCMH-type domain in the interval 35 to 216; the sequence is RAGGPAQVLF…KQAMDEVQHH (182 aa). The active site involves Arg-181. The active-site Proton donor is the Ser-230. Glu-300 is a catalytic residue.

Belongs to the MurB family. The cofactor is FAD.

It is found in the cytoplasm. The catalysed reaction is UDP-N-acetyl-alpha-D-muramate + NADP(+) = UDP-N-acetyl-3-O-(1-carboxyvinyl)-alpha-D-glucosamine + NADPH + H(+). Its pathway is cell wall biogenesis; peptidoglycan biosynthesis. In terms of biological role, cell wall formation. The protein is UDP-N-acetylenolpyruvoylglucosamine reductase of Brucella anthropi (strain ATCC 49188 / DSM 6882 / CCUG 24695 / JCM 21032 / LMG 3331 / NBRC 15819 / NCTC 12168 / Alc 37) (Ochrobactrum anthropi).